The primary structure comprises 332 residues: MPGPLRVLITGAAGQIAYNLSNMVANGNLFGKDQKIILHLLDIPEAKTVLEGVVMELQDCAFTVLEGIVPTHCLKEAFTDIDVALMVGAMPRKQGMERRDLLSSNVKIFKDQGEALEKYAKKTVKVLVVGNPANTNCLIMSKYAPSIPKENFTALSRLDHNRAIYQVAAKVGVPSECVKNVCIWGNHSNKQFPDLAHAVVTKGGKQHPAKELINDEKWVKEVFTPCVQNRGAAVIGLRKLSSAASAAKAIVDQMHDWWFGTKEGEWVSMSVYSTGEHYGAPKDIYFSFPVTIKNGHYKVVDGLAMDEWGKGLFKITADELVDEREVALSSFK.

NAD(+)-binding positions include 11-17 (GAAGQIA) and D42. Residues R92 and R98 each contribute to the substrate site. Residues N105, Q112, and 129–131 (VGN) contribute to the NAD(+) site. Residues N131 and R162 each contribute to the substrate site. Residue H187 is the Proton acceptor of the active site.

Belongs to the LDH/MDH superfamily. MDH type 2 family. In terms of assembly, homodimer.

It is found in the cytoplasm. It carries out the reaction (S)-malate + NAD(+) = oxaloacetate + NADH + H(+). With respect to regulation, by arsenate for both the forward and reverse reactions. Malate dehydrogenase. Has no activity with NADPH as substrate. Does not show lactate dehydrogenase activity. In Taenia solium (Pork tapeworm), this protein is Malate dehydrogenase, cytoplasmic.